A 242-amino-acid polypeptide reads, in one-letter code: RxLR effector protein PexRD15 (242 aa).

The N-terminal stretch at 1–24 is a signal peptide; the sequence is MMKSLYAVNLVLLLLLAFFAPAPA. The RxLR-dEER motif lies at 48 to 66; sequence RLLRAHSSDKEEQKEEEER.

This sequence belongs to the RxLR effector family.

The protein localises to the secreted. It is found in the host cell membrane. In terms of biological role, effector that enhances P.infestans colonization of Nicotiana benthamiana leaves. This Phytophthora infestans (strain T30-4) (Potato late blight agent) protein is RxLR effector protein PexRD15.